A 372-amino-acid chain; its full sequence is DNA-directed RNA polymerase subunit alpha (372 aa).

Positions 1–268 are alpha N-terminal domain (alpha-NTD); sequence MIFDEDSNSV…DQFQPFINFD (268 aa). The tract at residues 280 to 372 is alpha C-terminal domain (alpha-CTD); it reads KDALPYDSNL…ESLSKQYSEE (93 aa).

Belongs to the RNA polymerase alpha chain family. In terms of assembly, homodimer. The RNAP catalytic core consists of 2 alpha, 1 beta, 1 beta' and 1 omega subunit. When a sigma factor is associated with the core the holoenzyme is formed, which can initiate transcription.

It carries out the reaction RNA(n) + a ribonucleoside 5'-triphosphate = RNA(n+1) + diphosphate. In terms of biological role, DNA-dependent RNA polymerase catalyzes the transcription of DNA into RNA using the four ribonucleoside triphosphates as substrates. In Ehrlichia canis (strain Jake), this protein is DNA-directed RNA polymerase subunit alpha.